Here is a 407-residue protein sequence, read N- to C-terminus: MALPKDVKKVVLAYSGGLDTSIILKWLQTELGAEVVTFTADLGQGEELEPARKKAEMLGIKEIFVEDVREEFVRDFVFPMFRANAVYEGVYLLGTSIARPLISKHLIEIAKKTGADAIAHGATGKGNDQVRFELSAYALNPDIKIIAPWRDWTFKSRTDLLNFAEQHQIPVAKDKKGEAPFSVDANLLHSSSEGKVLEDPAVEAPEYVHMRTISPEAAPDKATVIKVGFRKGDACSINGVEMSPATLLATLNNYGRENGIGRLDLVENRFVGMKSRGVYETPGGTILLAAHRAIESITLDRGAAHLKDDLMPRYAELIYYGFWFSPEREMLQALIDKSQEHVEGEVTLKLYKGNVMVTGRESEKSLYSDALVTFEDDHGAYDQKDAAGFIKLNALRLRTLAKRNLNK.

ATP-binding positions include alanine 13–serine 21 and alanine 40. 2 residues coordinate L-citrulline: tyrosine 91 and serine 96. Glycine 121 contributes to the ATP binding site. Threonine 123, asparagine 127, and aspartate 128 together coordinate L-aspartate. Asparagine 127 contributes to the L-citrulline binding site. 5 residues coordinate L-citrulline: arginine 131, serine 182, serine 191, glutamate 267, and tyrosine 279.

This sequence belongs to the argininosuccinate synthase family. Type 1 subfamily. In terms of assembly, homotetramer.

It localises to the cytoplasm. The catalysed reaction is L-citrulline + L-aspartate + ATP = 2-(N(omega)-L-arginino)succinate + AMP + diphosphate + H(+). It functions in the pathway amino-acid biosynthesis; L-arginine biosynthesis; L-arginine from L-ornithine and carbamoyl phosphate: step 2/3. The polypeptide is Argininosuccinate synthase (Agrobacterium fabrum (strain C58 / ATCC 33970) (Agrobacterium tumefaciens (strain C58))).